Here is a 333-residue protein sequence, read N- to C-terminus: ADP-L-glycero-D-manno-heptose-6-epimerase (333 aa).

Residues 11-12 (FI), 32-33 (DN), Lys-39, Lys-54, 76-80 (QGACS), and Asn-93 each bind NADP(+). Catalysis depends on Tyr-140, which acts as the Proton acceptor. Lys-144 provides a ligand contact to NADP(+). Asn-170 serves as a coordination point for substrate. Residues Val-171 and Lys-179 each coordinate NADP(+). Lys-179 functions as the Proton acceptor in the catalytic mechanism. Substrate is bound by residues Arg-181, His-188, 202–205 (FGGW), Arg-215, and Tyr-294.

It belongs to the NAD(P)-dependent epimerase/dehydratase family. HldD subfamily. In terms of assembly, homopentamer. It depends on NADP(+) as a cofactor.

The catalysed reaction is ADP-D-glycero-beta-D-manno-heptose = ADP-L-glycero-beta-D-manno-heptose. Its pathway is nucleotide-sugar biosynthesis; ADP-L-glycero-beta-D-manno-heptose biosynthesis; ADP-L-glycero-beta-D-manno-heptose from D-glycero-beta-D-manno-heptose 7-phosphate: step 4/4. It participates in bacterial outer membrane biogenesis; LPS core biosynthesis. Catalyzes the interconversion between ADP-D-glycero-beta-D-manno-heptose and ADP-L-glycero-beta-D-manno-heptose via an epimerization at carbon 6 of the heptose. This is ADP-L-glycero-D-manno-heptose-6-epimerase from Chromobacterium violaceum (strain ATCC 12472 / DSM 30191 / JCM 1249 / CCUG 213 / NBRC 12614 / NCIMB 9131 / NCTC 9757 / MK).